Here is a 503-residue protein sequence, read N- to C-terminus: Maturase K (503 aa).

The protein belongs to the intron maturase 2 family. MatK subfamily.

The protein resides in the plastid. It is found in the chloroplast. Its function is as follows. Usually encoded in the trnK tRNA gene intron. Probably assists in splicing its own and other chloroplast group II introns. In Vicia sativa (Spring vetch), this protein is Maturase K.